Consider the following 475-residue polypeptide: Trifunctional enzyme subunit beta, mitochondrial (475 aa).

A mitochondrion-targeting transit peptide spans 1-34 (MTTILTSTFRNLSTTSKWALRSSIRPLSCSSQLH). Lys53 bears the N6-succinyllysine mark. Lys73 is modified (N6-acetyllysine; alternate). Lys73 is modified (N6-succinyllysine; alternate). Cys139 serves as the catalytic Acyl-thioester intermediate. Residues 174-221 (IRHSRNMRKMMLDLNKAKTLGQRLSLLSKFRLNFLSPELPAVAEFSTN) lie within the membrane without spanning it. Lys189 carries the post-translational modification N6-acetyllysine; alternate. Lys189 carries the N6-succinyllysine; alternate modification. Residues Lys191, Lys273, and Lys292 each carry the N6-succinyllysine modification. Lys294 carries the N6-acetyllysine; alternate modification. At Lys294 the chain carries N6-succinyllysine; alternate. Lys299 is subject to N6-acetyllysine. The residue at position 333 (Lys333) is an N6-acetyllysine; alternate. An N6-succinyllysine; alternate modification is found at Lys333. N6-acetyllysine is present on residues Lys349 and Lys362. Cys459 (proton donor/acceptor) is an active-site residue.

This sequence belongs to the thiolase-like superfamily. Thiolase family. In terms of assembly, heterotetramer of 2 alpha/HADHA and 2 beta/HADHB subunits; forms the mitochondrial trifunctional enzyme. Also purified as higher order heterooligomers including a 4 alpha/HADHA and 4 beta/HADHB heterooligomer which physiological significance remains unclear. The mitochondrial trifunctional enzyme interacts with MTLN. Interacts with RSAD2/viperin. Post-translationally, acetylation of Lys-202 is observed in liver mitochondria from fasted mice but not from fed mice.

The protein localises to the mitochondrion. Its subcellular location is the mitochondrion inner membrane. The protein resides in the mitochondrion outer membrane. It localises to the endoplasmic reticulum. It catalyses the reaction an acyl-CoA + acetyl-CoA = a 3-oxoacyl-CoA + CoA. It carries out the reaction butanoyl-CoA + acetyl-CoA = 3-oxohexanoyl-CoA + CoA. The catalysed reaction is hexanoyl-CoA + acetyl-CoA = 3-oxooctanoyl-CoA + CoA. The enzyme catalyses octanoyl-CoA + acetyl-CoA = 3-oxodecanoyl-CoA + CoA. It catalyses the reaction decanoyl-CoA + acetyl-CoA = 3-oxododecanoyl-CoA + CoA. It carries out the reaction dodecanoyl-CoA + acetyl-CoA = 3-oxotetradecanoyl-CoA + CoA. The catalysed reaction is tetradecanoyl-CoA + acetyl-CoA = 3-oxohexadecanoyl-CoA + CoA. The protein operates within lipid metabolism; fatty acid beta-oxidation. Functionally, mitochondrial trifunctional enzyme catalyzes the last three of the four reactions of the mitochondrial beta-oxidation pathway. The mitochondrial beta-oxidation pathway is the major energy-producing process in tissues and is performed through four consecutive reactions breaking down fatty acids into acetyl-CoA. Among the enzymes involved in this pathway, the trifunctional enzyme exhibits specificity for long-chain fatty acids. Mitochondrial trifunctional enzyme is a heterotetrameric complex composed of two proteins, the trifunctional enzyme subunit alpha/HADHA carries the 2,3-enoyl-CoA hydratase and the 3-hydroxyacyl-CoA dehydrogenase activities, while the trifunctional enzyme subunit beta/HADHB described here bears the 3-ketoacyl-CoA thiolase activity. The protein is Trifunctional enzyme subunit beta, mitochondrial (Hadhb) of Mus musculus (Mouse).